A 227-amino-acid polypeptide reads, in one-letter code: uncharacterized protein (227 aa).

2 helical membrane-spanning segments follow: residues 13 to 35 (CVRA…FAFS) and 155 to 177 (IFFR…MVFL). A disordered region spans residues 192-227 (GDARPRPAGPQGTARSRTDEAQVSPGTPPECPVSVF). Residues 217 to 227 (GTPPECPVSVF) are compositionally biased toward pro residues.

The protein resides in the cell membrane. This is an uncharacterized protein from Treponema pallidum (strain Nichols).